A 214-amino-acid chain; its full sequence is Riboflavin kinase (214 aa).

The H-T-H motif-like stretch occupies residues 1–91 (MRSIMEVETL…YCSIFEDGGA (91 aa)). Residues 92-214 (PVMRGKVVTG…DGDEVEVTLE (123 aa)) form a riboflavin kinase region. Residue 101–106 (GLGEGQ) participates in CDP binding. Thr-130 and Asn-132 together coordinate Mg(2+). The FMN site is built by Thr-182 and Glu-190. A CDP-binding site is contributed by 195–198 (IKLR).

This sequence belongs to the archaeal riboflavin kinase family. It depends on Mg(2+) as a cofactor.

It carries out the reaction riboflavin + CTP = CDP + FMN + H(+). It participates in cofactor biosynthesis; FMN biosynthesis; FMN from riboflavin (CTP route): step 1/1. Functionally, catalyzes the CTP-dependent phosphorylation of riboflavin (vitamin B2) to form flavin mononucleotide (FMN). In Methanocella arvoryzae (strain DSM 22066 / NBRC 105507 / MRE50), this protein is Riboflavin kinase (ribK).